A 107-amino-acid chain; its full sequence is Protein HitA (107 aa).

Residues 5 to 107 form the HIT domain; that stretch reads IFCKIAAKEI…LHIHIMGTPV (103 aa). Residues 97 to 101 carry the Histidine triad motif motif; it reads HLHIH.

This is Protein HitA (hitA) from Neisseria gonorrhoeae.